The chain runs to 467 residues: Glutamate--tRNA ligase (467 aa).

Residues 10-20 (PSPTGYLHVGG) carry the 'HIGH' region motif. Positions 238-242 (RLSKR) match the 'KMSKS' region motif. Residue K241 coordinates ATP.

It belongs to the class-I aminoacyl-tRNA synthetase family. Glutamate--tRNA ligase type 1 subfamily. In terms of assembly, monomer.

It is found in the cytoplasm. It carries out the reaction tRNA(Glu) + L-glutamate + ATP = L-glutamyl-tRNA(Glu) + AMP + diphosphate. In terms of biological role, catalyzes the attachment of glutamate to tRNA(Glu) in a two-step reaction: glutamate is first activated by ATP to form Glu-AMP and then transferred to the acceptor end of tRNA(Glu). The chain is Glutamate--tRNA ligase from Citrifermentans bemidjiense (strain ATCC BAA-1014 / DSM 16622 / JCM 12645 / Bem) (Geobacter bemidjiensis).